Consider the following 105-residue polypeptide: Heat shock protein HspQ (105 aa).

The disordered stretch occupies residues 75-105 (GEMQEEHPEQPSMDELARSIRQQLQAPRLRN).

This sequence belongs to the HspQ family.

Its subcellular location is the cytoplasm. Involved in the degradation of certain denaturated proteins, including DnaA, during heat shock stress. The polypeptide is Heat shock protein HspQ (Cronobacter sakazakii (strain ATCC BAA-894) (Enterobacter sakazakii)).